The sequence spans 198 residues: dITP/XTP pyrophosphatase (198 aa).

Substrate is bound at residue 7-12 (THNPHK). Mg(2+)-binding residues include Glu-40 and Asp-69. Residue Asp-69 is the Proton acceptor of the active site. Residues Thr-70, 151–154 (FGYD), Lys-174, and 179–180 (HR) contribute to the substrate site.

It belongs to the HAM1 NTPase family. As to quaternary structure, homodimer. Mg(2+) serves as cofactor.

The catalysed reaction is XTP + H2O = XMP + diphosphate + H(+). It carries out the reaction dITP + H2O = dIMP + diphosphate + H(+). It catalyses the reaction ITP + H2O = IMP + diphosphate + H(+). In terms of biological role, pyrophosphatase that catalyzes the hydrolysis of nucleoside triphosphates to their monophosphate derivatives, with a high preference for the non-canonical purine nucleotides XTP (xanthosine triphosphate), dITP (deoxyinosine triphosphate) and ITP. Seems to function as a house-cleaning enzyme that removes non-canonical purine nucleotides from the nucleotide pool, thus preventing their incorporation into DNA/RNA and avoiding chromosomal lesions. The sequence is that of dITP/XTP pyrophosphatase from Thermoanaerobacter sp. (strain X514).